We begin with the raw amino-acid sequence, 170 residues long: Zinc finger matrin-type protein 5 (170 aa).

The C3H1-type zinc finger occupies 51–79 (EQNKRPCRKFLLTGQCDFGSNCRFSHMSE). The tract at residues 150 to 170 (PPSLRAPPPGGWPLQPSVQWG) is disordered.

In terms of assembly, component of the U11/U12 snRNPs that are part of the U12-type spliceosome.

It localises to the nucleus. This is Zinc finger matrin-type protein 5 (ZMAT5) from Bos taurus (Bovine).